The following is a 130-amino-acid chain: Aspartate 1-decarboxylase (130 aa).

Ser-25 (schiff-base intermediate with substrate; via pyruvic acid) is an active-site residue. A Pyruvic acid (Ser) modification is found at Ser-25. Thr-57 contributes to the substrate binding site. The active-site Proton donor is Tyr-58. Residue 73–75 coordinates substrate; sequence GAA.

Belongs to the PanD family. Heterooctamer of four alpha and four beta subunits. Pyruvate serves as cofactor. Is synthesized initially as an inactive proenzyme, which is activated by self-cleavage at a specific serine bond to produce a beta-subunit with a hydroxyl group at its C-terminus and an alpha-subunit with a pyruvoyl group at its N-terminus.

It localises to the cytoplasm. It catalyses the reaction L-aspartate + H(+) = beta-alanine + CO2. It functions in the pathway cofactor biosynthesis; (R)-pantothenate biosynthesis; beta-alanine from L-aspartate: step 1/1. In terms of biological role, catalyzes the pyruvoyl-dependent decarboxylation of aspartate to produce beta-alanine. This is Aspartate 1-decarboxylase from Myxococcus xanthus (strain DK1622).